The chain runs to 312 residues: Olfactory receptor 51B2 (312 aa).

Over 1-23 (MWPNITAAPFLLTGFPGLEAAHH) the chain is Extracellular. The N-linked (GlcNAc...) asparagine glycan is linked to Asn4. A helical membrane pass occupies residues 24-44 (WISIPFFAVYVCILLGNGMLL). The Cytoplasmic segment spans residues 45 to 52 (YLIKHDHS). The helical transmembrane segment at 53-73 (LHEPMYYFLTMLAGTDLMVTL) threads the bilayer. The Extracellular segment spans residues 74–97 (TTMPTVMGILWVNHREISSVGCFL). A disulfide bridge connects residues Cys95 and Cys187. The chain crosses the membrane as a helical span at residues 98 to 118 (QAYFIHSLSVVESGSLLAMAY). The Cytoplasmic portion of the chain corresponds to 119-137 (DCFIAIRNPLRYASILTNT). The chain crosses the membrane as a helical span at residues 138-158 (RVIALGVGVFLRGFVSILPVI). The Extracellular segment spans residues 159–194 (LRLFSFSYCKSHVITRAFCLHQEIMRLACADITFNR). Residues 195-215 (LYPVILISLTIFLDCLIILFS) traverse the membrane as a helical segment. At 216–235 (YILILNTVIGIASGEERAKA) the chain is on the cytoplasmic side. The helical transmembrane segment at 236–256 (LNTCISHISCVLIFYVTVMGL) threads the bilayer. At 257 to 271 (TFIYRFGKNVPEVVH) the chain is on the extracellular side. Residues 272-292 (IIMSYIYFLFPPLMNPVIYSI) form a helical membrane-spanning segment. At 293–312 (KTKQIQYGIIRLLSKHRFSS) the chain is on the cytoplasmic side.

This sequence belongs to the G-protein coupled receptor 1 family. Ubiquitinated by the CRL2(FEM1A) and CRL2(FEM1C) complexes, which recognize the -Lys-Xaa-Xaa-Arg C-degron at the C-terminus, leading to its degradation.

It localises to the cell membrane. In terms of biological role, odorant receptor. The chain is Olfactory receptor 51B2 (OR51B2) from Homo sapiens (Human).